Here is a 274-residue protein sequence, read N- to C-terminus: ATP synthase subunit delta (274 aa).

Belongs to the ATPase delta chain family. As to quaternary structure, F-type ATPases have 2 components, F(1) - the catalytic core - and F(0) - the membrane proton channel. F(1) has five subunits: alpha(3), beta(3), gamma(1), delta(1), epsilon(1). F(0) has three main subunits: a(1), b(2) and c(10-14). The alpha and beta chains form an alternating ring which encloses part of the gamma chain. F(1) is attached to F(0) by a central stalk formed by the gamma and epsilon chains, while a peripheral stalk is formed by the delta and b chains.

It localises to the cell membrane. Functionally, f(1)F(0) ATP synthase produces ATP from ADP in the presence of a proton or sodium gradient. F-type ATPases consist of two structural domains, F(1) containing the extramembraneous catalytic core and F(0) containing the membrane proton channel, linked together by a central stalk and a peripheral stalk. During catalysis, ATP synthesis in the catalytic domain of F(1) is coupled via a rotary mechanism of the central stalk subunits to proton translocation. Its function is as follows. This protein is part of the stalk that links CF(0) to CF(1). It either transmits conformational changes from CF(0) to CF(1) or is implicated in proton conduction. The polypeptide is ATP synthase subunit delta (Corynebacterium efficiens (strain DSM 44549 / YS-314 / AJ 12310 / JCM 11189 / NBRC 100395)).